The chain runs to 255 residues: Microfibril-associated glycoprotein 4 (255 aa).

A signal peptide spans 1–20 (MEALLVLPLLLLLSAGPCAP). Residues 26 to 28 (RGD) carry the Cell attachment site motif. Residues 32-255 (KSCLQLPLDC…KRTEMKIRRA (224 aa)) enclose the Fibrinogen C-terminal domain. 2 N-linked (GlcNAc...) asparagine glycosylation sites follow: asparagine 87 and asparagine 137.

In terms of assembly, homodimer. Can also form higher oligomers. Interacts with FBN1, FBN2 and LOX. Interacts with COL1A1 in a Ca (2+)-dependent manner. Interacts with ELN in a Ca (2+)-dependent manner; this interaction promotes ELN self-assembly.

The protein resides in the secreted. The protein localises to the extracellular space. It localises to the extracellular matrix. In terms of biological role, could be involved in calcium-dependent cell adhesion or intercellular interactions. May contribute to the elastic fiber assembly and/or maintenance. The polypeptide is Microfibril-associated glycoprotein 4 (MFAP4) (Bos taurus (Bovine)).